Consider the following 513-residue polypeptide: Microcin J25-processing protein McjC (513 aa).

Residues 176–436 enclose the Asparagine synthetase domain; the sequence is STIDSIIDNI…FGSDIFWKKT (261 aa).

It localises to the cytoplasm. Along with McjB, necessary and sufficient to process the inactive microcin J25 (McjA) precursor into the active peptide. May be involved in the formation of the amide bond between Gly-38 and Glu-53 of McjA. The protein is Microcin J25-processing protein McjC (mcjC) of Escherichia coli.